The sequence spans 398 residues: Streptopain (398 aa).

A signal peptide spans 1-27 (MNKKKLGIRLLSLLALGGFVLANPVFA). Positions 28-145 (DQNFARNEKE…TTYAGTAEIK (118 aa)) are excised as a propeptide. Catalysis depends on C192, which acts as the Nucleophile. C192 is subject to Cysteine methyl disulfide; in zymogen form. A protein-binding residues include S282 and G339. H340 acts as the Proton acceptor in catalysis. The interval 368–390 (RLDALNPSALGTGGGAGGFNGYQ) is C-terminal active site loop.

This sequence belongs to the peptidase C10 family. As to quaternary structure, monomer. The mature protease is derived from the precursor sequence by cleavage, either in cis via an autocatalytic mechanism, or in trans by mature SpeB or host proteases (trypsin, plasmin or subtilisin). Maturation can involve a number of protein cleavage intermediates. Mature SpeB probably plays the most important role in protein maturation in physiological conditions. Post-translationally, methylthiolation at Cys-192 of the inactive zymogen form is probably involved in the mechanism of secretion of the proteinase into the culture fluid.

It localises to the secreted. The protein resides in the host extracellular space. It is found in the host cytoplasm. It carries out the reaction Preferential cleavage with hydrophobic residues at P2, P1 and P1'.. With respect to regulation, synthesized as an inactive zymogen to protect the intracellular components of the bacteria from proteolytic activity during protein production. Once secreted into the extracellular milieu, cleaved into the active protease: maturation can be mediated in cis by autocatalytic cleavage, or in trans by mature SpeB or host proteases. Protease activity is strongly inhibited by zinc and copper, which prevent its maturation into an active protease: inhibition by metal ions may be required to prevent proteolysis of streptococcal proteins. Functionally, cysteine protease that acts as a key streptococcal virulence factor by cleaving host proteins involved in immune response. Triggers inflammation by mediating cleavage of host proteins, which can both promote host pathogenesis by triggering sterile inflammation and/or restrict streptococcal infection, depending on host immune statue and infection site. Cleaves host gasdermin-A (GSDMA) in epithelial cells, promoting GSDMA activation and formation of gasdermin pores, triggering pyroptosis. Pyroptosis triggers the elimination of the infected skin cell, depriving the pathogen of its protective niche, while inducing an inflammatory response. This ultimately prevents bacterial penetration of the epithelial barrier and a subsequent systemic dissemination of the pathogen. Also mediates cleavage of the cytokine precursor interleukin-1 beta (IL1B) to its mature form, resulting in inflammation and septic shock. SpeB-mediated maturation of IL1B plays a dual role depending on infection site: while IL1B inflammatory response prevents bacterial growth during invasive skin infections, it promotes streptococcal infection of the nasopharynx by disrupting colonization resistance mediated by the microbiota. Inhibits host autophagy be catalyzing cleavage and inactivation of key autophagy factors, such as CALCOCO2, NBR1 and SQSTM1. Cleaves and inhibits a number of complement factors, such as C2, C3-beta chain of C3, C4, C5 or SERPING1, thereby promoting evasion of host immunity. May also impair adaptive immunity by catalyzing cleavage and degradation of host immunoglobulins to promote immune system evasion; the relevance of this activity is however unsure in vivo. Catalyzes maturation and release of the peptide hormone bradykinin from the precursor Kininogen-1 (KNG1) to produce hypotension during septic shock. Also involved in bacterial translocation across the host epithelial barrier by mediating cleavage and degradation of host epithelial junction proteins, such as CDH1 and OCLN. Additionally, has been involved in degradation of fibronectin and vitronectin, two host extracellular matrix proteins involved in tissue integrity. Also able to catalyze cleavage and degradation of streptococcal proteins, such as C5a peptidase, EndoS or SmeZ. Degradation of streptococcal proteins is however strictly regulated to preserve integrity of other virulence factors. This Streptococcus pyogenes serotype M28 (strain MGAS6180) protein is Streptopain (speB).